The chain runs to 258 residues: UPF0246 protein NTHI1156 (258 aa).

It belongs to the UPF0246 family.

This chain is UPF0246 protein NTHI1156, found in Haemophilus influenzae (strain 86-028NP).